A 342-amino-acid chain; its full sequence is Ribosomal RNA small subunit methyltransferase H (342 aa).

S-adenosyl-L-methionine contacts are provided by residues 43 to 45 (GGY), Asp61, Phe87, Asp108, and Gln115. A disordered region spans residues 322-342 (ALDEASDGMNLPPLAELEKSR).

This sequence belongs to the methyltransferase superfamily. RsmH family.

It is found in the cytoplasm. The catalysed reaction is cytidine(1402) in 16S rRNA + S-adenosyl-L-methionine = N(4)-methylcytidine(1402) in 16S rRNA + S-adenosyl-L-homocysteine + H(+). In terms of biological role, specifically methylates the N4 position of cytidine in position 1402 (C1402) of 16S rRNA. The sequence is that of Ribosomal RNA small subunit methyltransferase H from Hyphomonas neptunium (strain ATCC 15444).